The primary structure comprises 350 residues: Biotin synthase (350 aa).

Residues 38–256 (NHVQVSTLLS…IAIARIMMPQ (219 aa)) enclose the Radical SAM core domain. [4Fe-4S] cluster is bound by residues Cys53, Cys57, and Cys60. 4 residues coordinate [2Fe-2S] cluster: Cys97, Cys128, Cys188, and Arg260.

This sequence belongs to the radical SAM superfamily. Biotin synthase family. As to quaternary structure, homodimer. [4Fe-4S] cluster serves as cofactor. Requires [2Fe-2S] cluster as cofactor.

It catalyses the reaction (4R,5S)-dethiobiotin + (sulfur carrier)-SH + 2 reduced [2Fe-2S]-[ferredoxin] + 2 S-adenosyl-L-methionine = (sulfur carrier)-H + biotin + 2 5'-deoxyadenosine + 2 L-methionine + 2 oxidized [2Fe-2S]-[ferredoxin]. The protein operates within cofactor biosynthesis; biotin biosynthesis; biotin from 7,8-diaminononanoate: step 2/2. Functionally, catalyzes the conversion of dethiobiotin (DTB) to biotin by the insertion of a sulfur atom into dethiobiotin via a radical-based mechanism. This Vibrio parahaemolyticus serotype O3:K6 (strain RIMD 2210633) protein is Biotin synthase.